Reading from the N-terminus, the 327-residue chain is Ketol-acid reductoisomerase (NADP(+)) (327 aa).

In terms of domain architecture, KARI N-terminal Rossmann spans A2 to T182. Residues Y25 to Q28, R48, S53, and D83 to Q86 contribute to the NADP(+) site. H108 is a catalytic residue. G134 serves as a coordination point for NADP(+). Residues T183–G327 form the KARI C-terminal knotted domain. D191, E195, E227, and E231 together coordinate Mg(2+). A substrate-binding site is contributed by S252.

Belongs to the ketol-acid reductoisomerase family. It depends on Mg(2+) as a cofactor.

The enzyme catalyses (2R)-2,3-dihydroxy-3-methylbutanoate + NADP(+) = (2S)-2-acetolactate + NADPH + H(+). It carries out the reaction (2R,3R)-2,3-dihydroxy-3-methylpentanoate + NADP(+) = (S)-2-ethyl-2-hydroxy-3-oxobutanoate + NADPH + H(+). The protein operates within amino-acid biosynthesis; L-isoleucine biosynthesis; L-isoleucine from 2-oxobutanoate: step 2/4. It functions in the pathway amino-acid biosynthesis; L-valine biosynthesis; L-valine from pyruvate: step 2/4. In terms of biological role, involved in the biosynthesis of branched-chain amino acids (BCAA). Catalyzes an alkyl-migration followed by a ketol-acid reduction of (S)-2-acetolactate (S2AL) to yield (R)-2,3-dihydroxy-isovalerate. In the isomerase reaction, S2AL is rearranged via a Mg-dependent methyl migration to produce 3-hydroxy-3-methyl-2-ketobutyrate (HMKB). In the reductase reaction, this 2-ketoacid undergoes a metal-dependent reduction by NADPH to yield (R)-2,3-dihydroxy-isovalerate. The polypeptide is Ketol-acid reductoisomerase (NADP(+)) (Pyrobaculum neutrophilum (strain DSM 2338 / JCM 9278 / NBRC 100436 / V24Sta) (Thermoproteus neutrophilus)).